The following is a 238-amino-acid chain: MTHVEVVATIAPQLSIEETLIQKINHRIDAIDVLELRIDQIENVTVDQVAEMITKLKVMQDSFKLLVTYRTKLQGGYGQFTNDSYLNLISDLANINGIDMIDIEWQADIDIEKHQRIITHLQQYNKEVVISHHNFESTPPLDELQFIFFKMQKFNPEYVKLAVMPHNKNDVLNLLQAMSTFSDTMDCKVVGISMSKLGLISRTAQGVFGGALTYGCIGVPQAPGQIDVTDLKAQVTLY.

3-dehydroquinate is bound by residues 35-37 and R70; that span reads ELR. H133 (proton donor/acceptor) is an active-site residue. Residue K160 is the Schiff-base intermediate with substrate of the active site. 3-dehydroquinate-binding residues include R202 and Q225.

Belongs to the type-I 3-dehydroquinase family. Homodimer.

The catalysed reaction is 3-dehydroquinate = 3-dehydroshikimate + H2O. Its pathway is metabolic intermediate biosynthesis; chorismate biosynthesis; chorismate from D-erythrose 4-phosphate and phosphoenolpyruvate: step 3/7. Its function is as follows. Involved in the third step of the chorismate pathway, which leads to the biosynthesis of aromatic amino acids. Catalyzes the cis-dehydration of 3-dehydroquinate (DHQ) and introduces the first double bond of the aromatic ring to yield 3-dehydroshikimate. The chain is 3-dehydroquinate dehydratase from Staphylococcus aureus (strain USA300).